The chain runs to 107 residues: Probable monothiol glutaredoxin 2 (107 aa).

The 101-residue stretch at 7-107 (FKFIENEIKN…LEKMLKAYTR (101 aa)) folds into the Glutaredoxin domain. Glutathione is bound at residue lysine 24. Cysteine 32 lines the [2Fe-2S] cluster pocket. Glutathione-binding positions include arginine 61, phenylalanine 73, and 86–87 (CD).

It belongs to the glutaredoxin family. Monothiol subfamily.

The polypeptide is Probable monothiol glutaredoxin 2 (grxC2) (Rickettsia conorii (strain ATCC VR-613 / Malish 7)).